The sequence spans 179 residues: 3-hydroxyanthranilate 3,4-dioxygenase (179 aa).

Arg47 is a binding site for O2. The Fe cation site is built by His51, Glu57, and His96. Position 57 (Glu57) interacts with substrate. The substrate site is built by Arg100 and Glu110. Fe cation is bound by residues Cys125, Cys128, Cys162, and Cys165.

This sequence belongs to the 3-HAO family. It depends on Fe(2+) as a cofactor.

It catalyses the reaction 3-hydroxyanthranilate + O2 = (2Z,4Z)-2-amino-3-carboxymuconate 6-semialdehyde. It participates in cofactor biosynthesis; NAD(+) biosynthesis; quinolinate from L-kynurenine: step 3/3. Catalyzes the oxidative ring opening of 3-hydroxyanthranilate to 2-amino-3-carboxymuconate semialdehyde, which spontaneously cyclizes to quinolinate. The protein is 3-hydroxyanthranilate 3,4-dioxygenase of Bacillus cereus (strain ATCC 10987 / NRS 248).